A 351-amino-acid chain; its full sequence is Fe(3+) ions import ATP-binding protein FbpC (351 aa).

Residues 7–237 (VVLKNVCKRF…PSSMFMANFM (231 aa)) form the ABC transporter domain. 39 to 46 (GPSGCGKT) contributes to the ATP binding site.

It belongs to the ABC transporter superfamily. Fe(3+) ion importer (TC 3.A.1.10) family. In terms of assembly, the complex is composed of two ATP-binding proteins (FbpC), two transmembrane proteins (FbpB) and a solute-binding protein (FbpA).

It localises to the cell inner membrane. The enzyme catalyses Fe(3+)(out) + ATP + H2O = Fe(3+)(in) + ADP + phosphate + H(+). Its function is as follows. Part of the ABC transporter complex FbpABC involved in Fe(3+) ions import. Responsible for energy coupling to the transport system. The polypeptide is Fe(3+) ions import ATP-binding protein FbpC (Photobacterium profundum (strain SS9)).